Here is a 57-residue protein sequence, read N- to C-terminus: uncharacterized protein (57 aa).

This is an uncharacterized protein from Ureaplasma parvum serovar 3 (strain ATCC 700970).